A 292-amino-acid polypeptide reads, in one-letter code: Sulfofructosephosphate aldolase (292 aa).

The active-site Schiff-base intermediate with substrate is Lys-193.

This sequence belongs to the aldolase LacD family. In terms of assembly, homotetramer.

The enzyme catalyses 6-deoxy-6-sulfo-D-fructose 1-phosphate = (2S)-3-sulfolactaldehyde + dihydroxyacetone phosphate. In terms of biological role, cleaves 6-deoxy-6-sulfo-D-fructose 1-phosphate (SFP) to form dihydroxyacetone phosphate (DHAP) and 3-sulfolactaldehyde (SLA). Can also catalyze the reverse reaction. The chain is Sulfofructosephosphate aldolase (yihT) from Salmonella typhimurium (strain LT2 / SGSC1412 / ATCC 700720).